A 473-amino-acid polypeptide reads, in one-letter code: Ribulose bisphosphate carboxylase large chain (473 aa).

Residues Asn-116 and Thr-166 each coordinate substrate. Residue Lys-168 is the Proton acceptor of the active site. Lys-170 serves as a coordination point for substrate. Mg(2+) contacts are provided by Lys-194, Asp-196, and Glu-197. Lys-194 bears the N6-carboxylysine mark. Catalysis depends on His-287, which acts as the Proton acceptor. Substrate-binding residues include Arg-288, His-320, and Ser-372.

Belongs to the RuBisCO large chain family. Type I subfamily. Heterohexadecamer of 8 large chains and 8 small chains. Mg(2+) is required as a cofactor.

It carries out the reaction 2 (2R)-3-phosphoglycerate + 2 H(+) = D-ribulose 1,5-bisphosphate + CO2 + H2O. The catalysed reaction is D-ribulose 1,5-bisphosphate + O2 = 2-phosphoglycolate + (2R)-3-phosphoglycerate + 2 H(+). In terms of biological role, ruBisCO catalyzes two reactions: the carboxylation of D-ribulose 1,5-bisphosphate, the primary event in carbon dioxide fixation, as well as the oxidative fragmentation of the pentose substrate. Both reactions occur simultaneously and in competition at the same active site. The protein is Ribulose bisphosphate carboxylase large chain of Halorhodospira halophila (strain DSM 244 / SL1) (Ectothiorhodospira halophila (strain DSM 244 / SL1)).